The following is a 299-amino-acid chain: 4-hydroxybenzoate octaprenyltransferase (299 aa).

Transmembrane regions (helical) follow at residues 33–53, 56–76, 107–127, 151–171, 180–200, 214–234, 247–267, and 278–298; these read VGFLLLLWPTWWALWLAAGGV, WWTLCVFTTGIWLTRSAGCVI, LLMFATLMLIAFGLVLTMNQL, LPQVYLGLAFGWGIPMAFAAI, WLLYVANILWTTAYDTWCAMV, AILFADLDLTVQGVLYTLMLF, HTYWISLIAAVALIGYQFIIA, and AFMHNNWVGMTIFAGIALATT.

It belongs to the UbiA prenyltransferase family. The cofactor is Mg(2+).

It is found in the cell inner membrane. The enzyme catalyses all-trans-octaprenyl diphosphate + 4-hydroxybenzoate = 4-hydroxy-3-(all-trans-octaprenyl)benzoate + diphosphate. It participates in cofactor biosynthesis; ubiquinone biosynthesis. Its function is as follows. Catalyzes the prenylation of para-hydroxybenzoate (PHB) with an all-trans polyprenyl group. Mediates the second step in the final reaction sequence of ubiquinone-8 (UQ-8) biosynthesis, which is the condensation of the polyisoprenoid side chain with PHB, generating the first membrane-bound Q intermediate 3-octaprenyl-4-hydroxybenzoate. In Xylella fastidiosa (strain 9a5c), this protein is 4-hydroxybenzoate octaprenyltransferase.